We begin with the raw amino-acid sequence, 444 residues long: UDP-N-acetylmuramate--L-alanine ligase (444 aa).

Residue 110 to 116 (GAHGKTS) coordinates ATP.

The protein belongs to the MurCDEF family.

The protein localises to the cytoplasm. The catalysed reaction is UDP-N-acetyl-alpha-D-muramate + L-alanine + ATP = UDP-N-acetyl-alpha-D-muramoyl-L-alanine + ADP + phosphate + H(+). Its pathway is cell wall biogenesis; peptidoglycan biosynthesis. Cell wall formation. The chain is UDP-N-acetylmuramate--L-alanine ligase from Streptococcus pneumoniae (strain JJA).